The sequence spans 345 residues: D(2) dopamine receptor B (345 aa).

Residues 1–10 (EWRFSRIHCD) lie on the Extracellular side of the membrane. C9 and C84 are joined by a disulfide. A helical membrane pass occupies residues 11 to 32 (IFVTLDVMMCTASILNLCAISI). Residues 33 to 53 (DRYTAVAMPMLYNTRYSSKRR) lie on the Cytoplasmic side of the membrane. Residues 54–74 (VTVMISVVWVLSFAISCPLLF) traverse the membrane as a helical segment. Residues 75-90 (GLNNTASTVCIIDNPA) are Extracellular-facing. N77 is a glycosylation site (N-linked (GlcNAc...) asparagine). Residues 91–115 (FVIYSSIVSFYVPFIVTLLVYVQIY) traverse the membrane as a helical segment. Topologically, residues 116–275 (IVLRKRRKRV…SQHKEKKATQ (160 aa)) are cytoplasmic. The span at 166–177 (KKKVEAGNHPED) shows a compositional bias: basic and acidic residues. Residues 166 to 199 (KKKVEAGNHPEDMEMEMMSSTSPPEKTKHKSASP) form a disordered region. Residues 276 to 297 (MLAIVLGVFIICWLPFFITHIL) form a helical membrane-spanning segment. At 298 to 311 (NMHCNCNIPQALYS) the chain is on the extracellular side. A disulfide bridge links C301 with C303. A helical membrane pass occupies residues 312–333 (AFTWLGYVNSAVNPIIYTTFNV). Topologically, residues 334-345 (EFRKAFIKILHC) are cytoplasmic. C345 carries the S-palmitoyl cysteine lipid modification.

It belongs to the G-protein coupled receptor 1 family. Palmitoylated. Palmitoylation is probably required for proper localization to the plasma membrane and stability of the receptor. As to expression, brain; pituitary.

The protein resides in the cell membrane. It is found in the golgi apparatus membrane. Its function is as follows. This is one of the five types (D1 to D5) of receptors for dopamine. The activity of this receptor is mediated by G proteins which inhibits adenylyl cyclase. In Xenopus D2R is involved in the regulation of the melanotrope cells of the intermediate pituitary during background adaptation of the animal. The chain is D(2) dopamine receptor B (drd2-b) from Xenopus laevis (African clawed frog).